The following is a 274-amino-acid chain: 4-hydroxy-tetrahydrodipicolinate reductase (274 aa).

Position 7–12 (7–12 (GVTGRM)) interacts with NAD(+). Position 40 (arginine 40) interacts with NADP(+). NAD(+) is bound by residues 103-105 (GTT) and 127-130 (SANF). Catalysis depends on histidine 160, which acts as the Proton donor/acceptor. A (S)-2,3,4,5-tetrahydrodipicolinate-binding site is contributed by histidine 161. Lysine 164 acts as the Proton donor in catalysis. 170–171 (GT) contacts (S)-2,3,4,5-tetrahydrodipicolinate.

This sequence belongs to the DapB family. In terms of assembly, homotetramer.

The protein resides in the cytoplasm. The catalysed reaction is (S)-2,3,4,5-tetrahydrodipicolinate + NAD(+) + H2O = (2S,4S)-4-hydroxy-2,3,4,5-tetrahydrodipicolinate + NADH + H(+). It carries out the reaction (S)-2,3,4,5-tetrahydrodipicolinate + NADP(+) + H2O = (2S,4S)-4-hydroxy-2,3,4,5-tetrahydrodipicolinate + NADPH + H(+). It functions in the pathway amino-acid biosynthesis; L-lysine biosynthesis via DAP pathway; (S)-tetrahydrodipicolinate from L-aspartate: step 4/4. Functionally, catalyzes the conversion of 4-hydroxy-tetrahydrodipicolinate (HTPA) to tetrahydrodipicolinate. This chain is 4-hydroxy-tetrahydrodipicolinate reductase, found in Blochmanniella floridana.